We begin with the raw amino-acid sequence, 820 residues long: Serine/threonine-protein phosphatase 4 regulatory subunit 3-A (820 aa).

Residues 1 to 100 enclose the WH1 domain; the sequence is MSDTRRRVKV…DEIWEKICQV (100 aa). Acidic residues predominate over residues 682–694; it reads ELWFNEDDEEEGE. Disordered regions lie at residues 682–712 and 750–820; these read ELWFNEDDEEEGEAVVPPVEKTKPEDDFPEG and AANG…RLGS. A compositionally biased stretch (basic and acidic residues) spans 701-712; sequence EKTKPEDDFPEG. Polar residues-rich tracts occupy residues 750 to 761 and 768 to 790; these read AANGANSTNSKS and PATSNGSSSKNTSLTTTVASTKG. Acidic residues predominate over residues 798–809; that stretch reads YPDDEDEEEEED.

It belongs to the SMEK family. Serine/threonine-protein phosphatase 4 (PP4) occurs in different assemblies of the catalytic and one or more regulatory subunits.

Its function is as follows. Regulatory subunit of serine/threonine-protein phosphatase 4 (PP4). The polypeptide is Serine/threonine-protein phosphatase 4 regulatory subunit 3-A (Xenopus laevis (African clawed frog)).